Reading from the N-terminus, the 532-residue chain is Flavin-containing monooxygenase 3 (532 aa).

Residues 9 to 13 (GAGVS), Glu-32, 40 to 41 (LW), and 61 to 62 (NS) each bind FAD. Residues 60–61 (SN) and 195–198 (SGCD) each bind NADP(+). Residue Ser-401 is modified to Phosphoserine. Residues 510-530 (FFFHWLKLFAIPILLIAVFLV) form a helical membrane-spanning segment.

The protein belongs to the FMO family. Requires FAD as cofactor.

The protein resides in the microsome membrane. The protein localises to the endoplasmic reticulum membrane. It catalyses the reaction trimethylamine + NADPH + O2 = trimethylamine N-oxide + NADP(+) + H2O. It carries out the reaction N,N-dimethylaniline + NADPH + O2 + H(+) = N,N-dimethylaniline N-oxide + NADP(+) + H2O. The catalysed reaction is hypotaurine + NADPH + O2 + H(+) = taurine + NADP(+) + H2O. The enzyme catalyses (S)-nicotine + NADPH + O2 = trans-(S)-nicotine N(1')-oxide + NADP(+) + H2O. It catalyses the reaction albendazole + NADPH + O2 + H(+) = albendazole S-oxide + NADP(+) + H2O. Its function is as follows. Essential hepatic enzyme that catalyzes the oxygenation of a wide variety of nitrogen- and sulfur-containing compounds including drugs as well as dietary compounds. Plays an important role in the metabolism of trimethylamine (TMA), via the production of trimethylamine N-oxide (TMAO) metabolite. TMA is generated by the action of gut microbiota using dietary precursors such as choline, choline containing compounds, betaine or L-carnitine. By regulating TMAO concentration, FMO3 directly impacts both platelet responsiveness and rate of thrombus formation. The sequence is that of Flavin-containing monooxygenase 3 (FMO3) from Pan troglodytes (Chimpanzee).